Consider the following 461-residue polypeptide: Argininosuccinate lyase (461 aa).

It belongs to the lyase 1 family. Argininosuccinate lyase subfamily. As to quaternary structure, homotetramer.

The protein localises to the cytoplasm. It catalyses the reaction 2-(N(omega)-L-arginino)succinate = fumarate + L-arginine. Its pathway is amino-acid biosynthesis; L-arginine biosynthesis; L-arginine from L-ornithine and carbamoyl phosphate: step 3/3. This is Argininosuccinate lyase from Nostoc punctiforme (strain ATCC 29133 / PCC 73102).